We begin with the raw amino-acid sequence, 167 residues long: SsrA-binding protein (167 aa).

The span at 139 to 158 (QNHDKRDAAKERDWQRDKQR) shows a compositional bias: basic and acidic residues. A disordered region spans residues 139–167 (QNHDKRDAAKERDWQRDKQRVMRRHNRDA).

This sequence belongs to the SmpB family.

It localises to the cytoplasm. Its function is as follows. Required for rescue of stalled ribosomes mediated by trans-translation. Binds to transfer-messenger RNA (tmRNA), required for stable association of tmRNA with ribosomes. tmRNA and SmpB together mimic tRNA shape, replacing the anticodon stem-loop with SmpB. tmRNA is encoded by the ssrA gene; the 2 termini fold to resemble tRNA(Ala) and it encodes a 'tag peptide', a short internal open reading frame. During trans-translation Ala-aminoacylated tmRNA acts like a tRNA, entering the A-site of stalled ribosomes, displacing the stalled mRNA. The ribosome then switches to translate the ORF on the tmRNA; the nascent peptide is terminated with the 'tag peptide' encoded by the tmRNA and targeted for degradation. The ribosome is freed to recommence translation, which seems to be the essential function of trans-translation. This chain is SsrA-binding protein, found in Xanthomonas oryzae pv. oryzae (strain MAFF 311018).